The chain runs to 353 residues: UPF0283 membrane protein YcjF (353 aa).

Transmembrane regions (helical) follow at residues 70 to 90 (MVMGGLALFGASVVGQGVQWT), 100 to 120 (VALGGCAAGALIIGAGVGSVV), and 213 to 233 (ESTLMIAVSPLALVDMAFIAW).

This sequence belongs to the UPF0283 family.

It localises to the cell inner membrane. The sequence is that of UPF0283 membrane protein YcjF from Shigella sonnei (strain Ss046).